The following is a 96-amino-acid chain: Large ribosomal subunit protein eL43 (96 aa).

A C4-type zinc finger spans residues 41-62 (CPVCAFPKLKRAGTSIWVCEKC).

Belongs to the eukaryotic ribosomal protein eL43 family. The cofactor is Zn(2+).

The protein is Large ribosomal subunit protein eL43 of Methanococcus maripaludis (strain C5 / ATCC BAA-1333).